The chain runs to 182 residues: Putative CTD phosphatase-like protein 355R (182 aa).

The FCP1 homology domain maps to 1 to 180 (MKNIFLDLDN…MRLKDVLNRH (180 aa)).

Belongs to the IIV-6 355R family.

In terms of biological role, may function as a phosphatase. This is Putative CTD phosphatase-like protein 355R from Invertebrate iridescent virus 6 (IIV-6).